The primary structure comprises 276 residues: Protein-glutamine gamma-glutamyltransferase (276 aa).

Belongs to the bacillus TGase family.

The catalysed reaction is L-glutaminyl-[protein] + L-lysyl-[protein] = [protein]-L-lysyl-N(6)-5-L-glutamyl-[protein] + NH4(+). Probably plays a role in the assembly of the spore coat proteins by catalyzing epsilon-(gamma-glutamyl)lysine cross-links. The protein is Protein-glutamine gamma-glutamyltransferase of Bacillus anthracis (strain A0248).